Consider the following 147-residue polypeptide: Large ribosomal subunit protein bL9 (147 aa).

Belongs to the bacterial ribosomal protein bL9 family.

Functionally, binds to the 23S rRNA. This is Large ribosomal subunit protein bL9 from Caldanaerobacter subterraneus subsp. tengcongensis (strain DSM 15242 / JCM 11007 / NBRC 100824 / MB4) (Thermoanaerobacter tengcongensis).